A 201-amino-acid polypeptide reads, in one-letter code: Recombination protein RecR (201 aa).

A C4-type zinc finger spans residues 60 to 75; sequence CSVCGNVDTTDPCSIC. The region spanning 83-178 is the Toprim domain; the sequence is TTIIVVEDVA…KITRLAHGVP (96 aa).

It belongs to the RecR family.

In terms of biological role, may play a role in DNA repair. It seems to be involved in an RecBC-independent recombinational process of DNA repair. It may act with RecF and RecO. In Bartonella quintana (strain Toulouse) (Rochalimaea quintana), this protein is Recombination protein RecR.